Here is a 314-residue protein sequence, read N- to C-terminus: Dihydroorotate dehydrogenase (fumarate) (314 aa).

FMN contacts are provided by residues alanine 21 and 45–46 (KS). Substrate is bound by residues lysine 45, 69–73 (NSMGL), and asparagine 129. Asparagine 129 contacts FMN. Residue cysteine 132 is the Nucleophile of the active site. Substrate is bound at residue asparagine 134. FMN is bound by residues lysine 166 and valine 195. 196-197 (NS) serves as a coordination point for substrate. FMN is bound by residues glycine 224, 251–252 (GG), and 273–274 (GT).

This sequence belongs to the dihydroorotate dehydrogenase family. Type 1 subfamily. In terms of assembly, homodimer. It depends on FMN as a cofactor.

The protein localises to the cytoplasm. The enzyme catalyses (S)-dihydroorotate + fumarate = orotate + succinate. The protein operates within pyrimidine metabolism; UMP biosynthesis via de novo pathway. Its function is as follows. Catalyzes the conversion of dihydroorotate to orotate with fumarate as the electron acceptor. Molecular oxygen can replace fumarate in vitro. The protein is Dihydroorotate dehydrogenase (fumarate) (pyr4) of Trypanosoma cruzi (strain CL Brener).